The primary structure comprises 198 residues: LexA repressor (198 aa).

The H-T-H motif DNA-binding region spans 28-47 (IRDIAKHFKLTPRGAHIHVL). Catalysis depends on for autocatalytic cleavage activity residues Ser120 and Lys157.

Belongs to the peptidase S24 family. In terms of assembly, homodimer.

The enzyme catalyses Hydrolysis of Ala-|-Gly bond in repressor LexA.. Functionally, represses a number of genes involved in the response to DNA damage (SOS response), including recA and lexA. In the presence of single-stranded DNA, RecA interacts with LexA causing an autocatalytic cleavage which disrupts the DNA-binding part of LexA, leading to derepression of the SOS regulon and eventually DNA repair. The sequence is that of LexA repressor from Thermosipho africanus (strain TCF52B).